A 1288-amino-acid polypeptide reads, in one-letter code: VWFA and cache domain-containing protein 1 (1288 aa).

The N-terminal stretch at 1–49 (MAREPEEEETVRPAAVVRRCPRCPGWPGAPRPPLWLLCLVACWILGAVA) is a signal peptide. Residues 50 to 1109 (DADFSILDEA…ITLNMIKSAP (1060 aa)) are Extracellular-facing. Asn159 is a glycosylation site (N-linked (GlcNAc...) asparagine). The VWFA domain maps to 242–457 (HIVVILDHGA…TTVGRFYTNL (216 aa)). Cache domains are found at residues 467 to 546 (FSLP…SEPP) and 786 to 867 (LTGP…HPTL). The chain crosses the membrane as a helical span at residues 1110–1130 (VGPVAGGIMGCIMVLVLAVYA). Residues 1131–1288 (YRHQIHRRSH…VTVHTVDAEC (158 aa)) are Cytoplasmic-facing. Disordered regions lie at residues 1157 to 1176 (NLEN…RGII) and 1187 to 1237 (ERHV…VDVG). Residues 1159-1174 (ENDRDERDDDSHEDRG) show a composition bias toward basic and acidic residues. Residues 1210 to 1229 (GYSTMSPQEDSENPPCNNDP) show a composition bias toward polar residues.

This sequence belongs to the calcium channel subunit alpha-2/delta family.

The protein resides in the membrane. Functionally, may regulate voltage-dependent calcium channels. The sequence is that of VWFA and cache domain-containing protein 1 (Cachd1) from Mus musculus (Mouse).